The following is a 248-amino-acid chain: MEPEETLESESSEKSLFSSQQEYEESQEAEETGAENPLLQPTLTGDVEGLQKIFEDPEHPHHEHAVQLLLEEDIVGRNLLYAACMAGKSDVIKALAKYGVNLNEATARGYTLLHCAAAWGRLETLKALVELDVDIEALNFRGEKARDVAARYSQVECVNFLDWADARLILKKIITKSSLIITDPEKGPGKLFKEDKSTILNACRLKNEWLESHPEASISEIFEQKQQLEDIVSPILAKMSTPRHFAAS.

Acidic residues-rich tracts occupy residues 1-10 (MEPEETLESE) and 22-33 (EYEESQEAEETG). The disordered stretch occupies residues 1-42 (MEPEETLESESSEKSLFSSQQEYEESQEAEETGAENPLLQPT). ANK repeat units follow at residues 75-104 (VGRN…NLNE) and 108-137 (RGYT…DIEA).

The protein localises to the cytoplasm. Its subcellular location is the midbody. The protein resides in the midbody ring. It localises to the cleavage furrow. Functionally, may play a role during cell division. The polypeptide is Ankyrin repeat domain-containing protein 45 (Ankrd45) (Mus musculus (Mouse)).